A 143-amino-acid chain; its full sequence is 3-dehydroquinate dehydratase (143 aa).

Residue tyrosine 22 is the Proton acceptor of the active site. The substrate site is built by asparagine 73, histidine 79, and aspartate 86. The Proton donor role is filled by histidine 99. Substrate is bound by residues 100 to 101 (LS) and arginine 110.

Belongs to the type-II 3-dehydroquinase family. As to quaternary structure, homododecamer.

The enzyme catalyses 3-dehydroquinate = 3-dehydroshikimate + H2O. Its pathway is metabolic intermediate biosynthesis; chorismate biosynthesis; chorismate from D-erythrose 4-phosphate and phosphoenolpyruvate: step 3/7. Functionally, catalyzes a trans-dehydration via an enolate intermediate. The chain is 3-dehydroquinate dehydratase from Salinispora tropica (strain ATCC BAA-916 / DSM 44818 / JCM 13857 / NBRC 105044 / CNB-440).